The following is a 114-amino-acid chain: uncharacterized protein (114 aa).

This is an uncharacterized protein from Human cytomegalovirus (strain AD169) (HHV-5).